The sequence spans 305 residues: Probable cell division protein WhiA (305 aa).

Residues 269–302 constitute a DNA-binding region (H-T-H motif); sequence TIKELGELLDPPLGKSGVNHRLRKLVERSNDLKK.

This sequence belongs to the WhiA family.

Its function is as follows. Involved in cell division and chromosome segregation. This Lactococcus lactis subsp. cremoris (strain MG1363) protein is Probable cell division protein WhiA.